A 324-amino-acid polypeptide reads, in one-letter code: NADH-ubiquinone oxidoreductase chain 1 (324 aa).

The next 8 membrane-spanning stretches (helical) occupy residues 9 to 29 (LINP…LTLI), 75 to 95 (FLFL…WAPM), 106 to 126 (LGIL…LGSG), 146 to 166 (ISYE…SGGY), 177 to 197 (SIWL…STLA), 228 to 248 (LFFL…AVLF), 259 to 279 (ELTT…FLWV), and 299 to 319 (FLPL…ALAG).

The protein belongs to the complex I subunit 1 family.

It is found in the mitochondrion inner membrane. It carries out the reaction a ubiquinone + NADH + 5 H(+)(in) = a ubiquinol + NAD(+) + 4 H(+)(out). Core subunit of the mitochondrial membrane respiratory chain NADH dehydrogenase (Complex I) that is believed to belong to the minimal assembly required for catalysis. Complex I functions in the transfer of electrons from NADH to the respiratory chain. The immediate electron acceptor for the enzyme is believed to be ubiquinone. This chain is NADH-ubiquinone oxidoreductase chain 1 (MT-ND1), found in Carassius auratus (Goldfish).